Reading from the N-terminus, the 488-residue chain is Glutamyl-tRNA(Gln) amidotransferase subunit A (488 aa).

Catalysis depends on charge relay system residues K77 and S152. Catalysis depends on S176, which acts as the Acyl-ester intermediate.

This sequence belongs to the amidase family. GatA subfamily. In terms of assembly, heterotrimer of A, B and C subunits.

It carries out the reaction L-glutamyl-tRNA(Gln) + L-glutamine + ATP + H2O = L-glutaminyl-tRNA(Gln) + L-glutamate + ADP + phosphate + H(+). Allows the formation of correctly charged Gln-tRNA(Gln) through the transamidation of misacylated Glu-tRNA(Gln) in organisms which lack glutaminyl-tRNA synthetase. The reaction takes place in the presence of glutamine and ATP through an activated gamma-phospho-Glu-tRNA(Gln). The chain is Glutamyl-tRNA(Gln) amidotransferase subunit A from Streptococcus pneumoniae (strain Hungary19A-6).